The chain runs to 462 residues: Glycine--tRNA ligase (462 aa).

Arg-98 and Glu-174 together coordinate substrate. ATP is bound by residues Arg-206 to Glu-208, Phe-216 to Phe-221, Glu-290 to Leu-291, and Gly-334 to Arg-337. Phe-221–Glu-225 contacts substrate. Glu-330–Gly-334 lines the substrate pocket.

This sequence belongs to the class-II aminoacyl-tRNA synthetase family. In terms of assembly, homodimer.

The protein localises to the cytoplasm. It catalyses the reaction tRNA(Gly) + glycine + ATP = glycyl-tRNA(Gly) + AMP + diphosphate. Catalyzes the attachment of glycine to tRNA(Gly). This Lachnoclostridium phytofermentans (strain ATCC 700394 / DSM 18823 / ISDg) (Clostridium phytofermentans) protein is Glycine--tRNA ligase.